Consider the following 1011-residue polypeptide: Retinoblastoma-related protein (1011 aa).

The disordered stretch occupies residues 1-22 (MSQASVDMEDVKPSISLPSDDG). Positions 411-612 (TPVSTAMTTA…ERGSSMYNSL (202 aa)) are domain A. A pocket region spans residues 411–860 (TPVSTAMTTA…NEVFIPSVKP (450 aa)). Residues 613 to 729 (IVARPTLAAE…PAGGGETCAE (117 aa)) are spacer. Residues 730–860 (TGINIFFNKI…NEVFIPSVKP (131 aa)) form a domain B region. The segment at 872 to 903 (QKSKSSPEDSNNADSQIPGSPRLSPFPNLPDM) is disordered. The span at 873–889 (KSKSSPEDSNNADSQIP) shows a compositional bias: polar residues.

It belongs to the retinoblastoma protein (RB) family.

The protein localises to the nucleus. Its function is as follows. Regulator of biological processes that recruits a histone deacetylase to control gene transcription. May play a role in the entry into mitosis, negatively regulating the cell proliferation. Formation of stable complexes with geminiviridae replication-associated proteins may create a cellular environment which favors viral DNA replication. This chain is Retinoblastoma-related protein (Rb1), found in Cocos nucifera (Coconut palm).